Reading from the N-terminus, the 192-residue chain is Putative metal-sulfur cluster biosynthesis proteins YuaD (192 aa).

The MOSC domain maps to 15–179 (ADTKSFVTKQ…VYTGDEIEVH (165 aa)).

The chain is Putative metal-sulfur cluster biosynthesis proteins YuaD (yuaD) from Bacillus subtilis (strain 168).